The primary structure comprises 1403 residues: DNA-directed RNA polymerase subunit beta' (1403 aa).

4 residues coordinate Zn(2+): Cys-71, Cys-73, Cys-86, and Cys-89. Mg(2+) is bound by residues Asp-462, Asp-464, and Asp-466. Residues Cys-811, Cys-885, Cys-892, and Cys-895 each contribute to the Zn(2+) site.

Belongs to the RNA polymerase beta' chain family. In terms of assembly, the RNAP catalytic core consists of 2 alpha, 1 beta, 1 beta' and 1 omega subunit. When a sigma factor is associated with the core the holoenzyme is formed, which can initiate transcription. Mg(2+) is required as a cofactor. Zn(2+) serves as cofactor.

The catalysed reaction is RNA(n) + a ribonucleoside 5'-triphosphate = RNA(n+1) + diphosphate. DNA-dependent RNA polymerase catalyzes the transcription of DNA into RNA using the four ribonucleoside triphosphates as substrates. In Bartonella bacilliformis (strain ATCC 35685 / KC583 / Herrer 020/F12,63), this protein is DNA-directed RNA polymerase subunit beta'.